A 638-amino-acid chain; its full sequence is 1-deoxy-D-xylulose-5-phosphate synthase (638 aa).

Residues His81 and 122–124 (GHS) each bind thiamine diphosphate. Asp153 contacts Mg(2+). Thiamine diphosphate is bound by residues 154 to 155 (GS), Asn182, Tyr293, and Glu377. Asn182 contacts Mg(2+).

Belongs to the transketolase family. DXPS subfamily. In terms of assembly, homodimer. It depends on Mg(2+) as a cofactor. Requires thiamine diphosphate as cofactor.

The catalysed reaction is D-glyceraldehyde 3-phosphate + pyruvate + H(+) = 1-deoxy-D-xylulose 5-phosphate + CO2. Its pathway is metabolic intermediate biosynthesis; 1-deoxy-D-xylulose 5-phosphate biosynthesis; 1-deoxy-D-xylulose 5-phosphate from D-glyceraldehyde 3-phosphate and pyruvate: step 1/1. Its function is as follows. Catalyzes the acyloin condensation reaction between C atoms 2 and 3 of pyruvate and glyceraldehyde 3-phosphate to yield 1-deoxy-D-xylulose-5-phosphate (DXP). This Oleidesulfovibrio alaskensis (strain ATCC BAA-1058 / DSM 17464 / G20) (Desulfovibrio alaskensis) protein is 1-deoxy-D-xylulose-5-phosphate synthase.